A 280-amino-acid polypeptide reads, in one-letter code: Fructose-1,6-bisphosphatase class 1 (280 aa).

Mg(2+) is bound by residues glutamate 64, aspartate 83, leucine 85, and aspartate 86. Substrate contacts are provided by residues 86–89 (DGSS), tyrosine 189, and lysine 220. Residue glutamate 226 participates in Mg(2+) binding.

The protein belongs to the FBPase class 1 family. As to quaternary structure, homotetramer. Requires Mg(2+) as cofactor.

The protein localises to the cytoplasm. The enzyme catalyses beta-D-fructose 1,6-bisphosphate + H2O = beta-D-fructose 6-phosphate + phosphate. The protein operates within carbohydrate biosynthesis; gluconeogenesis. In Campylobacter jejuni subsp. doylei (strain ATCC BAA-1458 / RM4099 / 269.97), this protein is Fructose-1,6-bisphosphatase class 1.